The primary structure comprises 122 residues: Small ribosomal subunit protein uS13 (122 aa).

The disordered stretch occupies residues 93-122; the sequence is RRGLPVRGQNTKTNARTRKGPKRTAGGKKK. Basic residues predominate over residues 107–122; it reads ARTRKGPKRTAGGKKK.

Belongs to the universal ribosomal protein uS13 family. Part of the 30S ribosomal subunit. Forms a loose heterodimer with protein S19. Forms two bridges to the 50S subunit in the 70S ribosome.

Its function is as follows. Located at the top of the head of the 30S subunit, it contacts several helices of the 16S rRNA. In the 70S ribosome it contacts the 23S rRNA (bridge B1a) and protein L5 of the 50S subunit (bridge B1b), connecting the 2 subunits; these bridges are implicated in subunit movement. Contacts the tRNAs in the A and P-sites. The protein is Small ribosomal subunit protein uS13 of Syntrophomonas wolfei subsp. wolfei (strain DSM 2245B / Goettingen).